A 345-amino-acid polypeptide reads, in one-letter code: S-adenosylmethionine:tRNA ribosyltransferase-isomerase (345 aa).

It belongs to the QueA family. As to quaternary structure, monomer.

It is found in the cytoplasm. It carries out the reaction 7-aminomethyl-7-carbaguanosine(34) in tRNA + S-adenosyl-L-methionine = epoxyqueuosine(34) in tRNA + adenine + L-methionine + 2 H(+). The protein operates within tRNA modification; tRNA-queuosine biosynthesis. Its function is as follows. Transfers and isomerizes the ribose moiety from AdoMet to the 7-aminomethyl group of 7-deazaguanine (preQ1-tRNA) to give epoxyqueuosine (oQ-tRNA). The chain is S-adenosylmethionine:tRNA ribosyltransferase-isomerase from Helicobacter pylori (strain G27).